Here is a 2789-residue protein sequence, read N- to C-terminus: Testis-expressed protein 15 (2789 aa).

The span at 34 to 46 shows a compositional bias: polar residues; it reads HNNTGSSTVTTSK. Disordered regions lie at residues 34 to 99, 169 to 191, 1063 to 1166, 2303 to 2331, and 2351 to 2379; these read HNNT…SSEV, ENQN…AYTK, FSSK…EHQP, KNIS…DTTV, and KATF…DSLK. Basic and acidic residues predominate over residues 47-59; that stretch reads SIKDPRLMRREES. Residues 80–98 show a composition bias toward polar residues; sequence DNVNSEIKSTPSNSASSSE. A compositionally biased stretch (basic and acidic residues) spans 170 to 179; the sequence is NQNHSEEKAQ. The segment covering 1063–1077 has biased composition (basic residues); the sequence is FSSKRKYDKRRKKRA. Composition is skewed to low complexity over residues 1106–1116 and 1134–1160; these read RKSMASSVSKS and SQLP…NPSL.

Belongs to the TEX15 family. In terms of assembly, interacts with PIWIL4 and PIWIL2. Expressed in testis, predominantly in germ cells. Low expression, if any, in ovary. Also expressed in several cancers.

It is found in the cytoplasm. It localises to the nucleus. Required during spermatogenesis for normal chromosome synapsis and meiotic recombination in germ cells. Necessary for formation of DMC1 and RAD51 foci on meiotic chromosomes, suggesting a specific role in DNA double-stranded break repair. Essential executor of PIWIL4-piRNA pathway directed transposon DNA methylation and silencing in the male embryonic germ cells. PIWIL4-piRNA binds to nascent transposon transcripts and interacts with TEX15, which may in turn recruit the epigenetic silencing machinery to the transposon loci. Not required for piRNA biosynthesis. This is Testis-expressed protein 15 (TEX15) from Homo sapiens (Human).